The following is a 157-amino-acid chain: Transcriptional repressor NrdR (157 aa).

The segment at 3–34 (CPFCNTVDTKVIDSRLVSEGSQIKRRRQCAIC) is a zinc-finger region. The 91-residue stretch at 49-139 (PRVIKNDDLL…VYRSFEDVRE (91 aa)) folds into the ATP-cone domain.

Belongs to the NrdR family. The cofactor is Zn(2+).

Its function is as follows. Negatively regulates transcription of bacterial ribonucleotide reductase nrd genes and operons by binding to NrdR-boxes. The polypeptide is Transcriptional repressor NrdR (Hamiltonella defensa subsp. Acyrthosiphon pisum (strain 5AT)).